Consider the following 288-residue polypeptide: NAD kinase (288 aa).

Aspartate 73 serves as the catalytic Proton acceptor. Residues 73 to 74 (DG), arginine 78, 144 to 145 (NE), aspartate 174, 185 to 190 (TAYSLS), and alanine 209 each bind NAD(+).

It belongs to the NAD kinase family. A divalent metal cation serves as cofactor.

The protein localises to the cytoplasm. The catalysed reaction is NAD(+) + ATP = ADP + NADP(+) + H(+). Functionally, involved in the regulation of the intracellular balance of NAD and NADP, and is a key enzyme in the biosynthesis of NADP. Catalyzes specifically the phosphorylation on 2'-hydroxyl of the adenosine moiety of NAD to yield NADP. This Porphyromonas gingivalis (strain ATCC BAA-308 / W83) protein is NAD kinase.